A 210-amino-acid polypeptide reads, in one-letter code: MIPSSPFLCFITDESRSPIILARKALEGGASMIQLRHKSADGDQLYHWSVAIQALCRKHKAIFIVNDRVDIALAAGADGVHLGQQDLPADAARKLLGKDRIMGISVSSPLEALAAEKNGADYVGFGHIFPTSSKDKKNTPVGPESIADIKAIITIPIIAIGGITGCNAQLPIRAGAAGIAVIAAVSRAADPEIAARELVGILQKNIEHNR.

4-amino-2-methyl-5-(diphosphooxymethyl)pyrimidine is bound by residues 34–38 and Asn66; that span reads QLRHK. Asp67 and Asp86 together coordinate Mg(2+). Residue Ser105 coordinates 4-amino-2-methyl-5-(diphosphooxymethyl)pyrimidine. 131 to 133 lines the 2-[(2R,5Z)-2-carboxy-4-methylthiazol-5(2H)-ylidene]ethyl phosphate pocket; sequence TSS. A 4-amino-2-methyl-5-(diphosphooxymethyl)pyrimidine-binding site is contributed by Lys134. Gly162 is a 2-[(2R,5Z)-2-carboxy-4-methylthiazol-5(2H)-ylidene]ethyl phosphate binding site.

The protein belongs to the thiamine-phosphate synthase family. The cofactor is Mg(2+).

The enzyme catalyses 2-[(2R,5Z)-2-carboxy-4-methylthiazol-5(2H)-ylidene]ethyl phosphate + 4-amino-2-methyl-5-(diphosphooxymethyl)pyrimidine + 2 H(+) = thiamine phosphate + CO2 + diphosphate. It carries out the reaction 2-(2-carboxy-4-methylthiazol-5-yl)ethyl phosphate + 4-amino-2-methyl-5-(diphosphooxymethyl)pyrimidine + 2 H(+) = thiamine phosphate + CO2 + diphosphate. It catalyses the reaction 4-methyl-5-(2-phosphooxyethyl)-thiazole + 4-amino-2-methyl-5-(diphosphooxymethyl)pyrimidine + H(+) = thiamine phosphate + diphosphate. Its pathway is cofactor biosynthesis; thiamine diphosphate biosynthesis; thiamine phosphate from 4-amino-2-methyl-5-diphosphomethylpyrimidine and 4-methyl-5-(2-phosphoethyl)-thiazole: step 1/1. Condenses 4-methyl-5-(beta-hydroxyethyl)thiazole monophosphate (THZ-P) and 2-methyl-4-amino-5-hydroxymethyl pyrimidine pyrophosphate (HMP-PP) to form thiamine monophosphate (TMP). The sequence is that of Thiamine-phosphate synthase from Chlorobium limicola (strain DSM 245 / NBRC 103803 / 6330).